A 370-amino-acid chain; its full sequence is DNA replication and repair protein RecF (370 aa).

30-37 (GENAQGKT) serves as a coordination point for ATP.

It belongs to the RecF family.

Its subcellular location is the cytoplasm. The RecF protein is involved in DNA metabolism; it is required for DNA replication and normal SOS inducibility. RecF binds preferentially to single-stranded, linear DNA. It also seems to bind ATP. This is DNA replication and repair protein RecF from Staphylococcus aureus (strain USA300).